The sequence spans 188 residues: Ubiquitin-like protein 4B (188 aa).

In terms of domain architecture, Ubiquitin-like spans 1-76; that stretch reads MFLTVKLLLG…INVIMRPPED (76 aa). Positions 146-188 are disordered; sequence EEKEAPAVASELEQNNGGGGGGGGTGGEGGGKKEEEEGEEADQ. Gly residues predominate over residues 161–174; the sequence is NGGGGGGGGTGGEG.

As to expression, expressed specifically in post-meiotic male germ cells of the testis. Abundantly expressed in stage 14-16 spermatids.

The protein localises to the cytoplasm. This is Ubiquitin-like protein 4B (Ubl4b) from Mus musculus (Mouse).